The primary structure comprises 65 residues: Large ribosomal subunit protein bL35 (65 aa).

Positions 1–25 (MPKLKTKSSAAKRFKKTGKGGFKHR) are disordered.

It belongs to the bacterial ribosomal protein bL35 family.

The polypeptide is Large ribosomal subunit protein bL35 (Francisella tularensis subsp. holarctica (strain FTNF002-00 / FTA)).